Here is a 183-residue protein sequence, read N- to C-terminus: GMP synthase [glutamine-hydrolyzing] subunit A (183 aa).

Residues 3–183 (HILVVDNHGQ…VFENFVAICE (181 aa)) enclose the Glutamine amidotransferase type-1 domain. The Nucleophile role is filled by Cys-74. Residues His-162 and Glu-164 contribute to the active site.

Heterodimer composed of a glutamine amidotransferase subunit (A) and a GMP-binding subunit (B).

It carries out the reaction XMP + L-glutamine + ATP + H2O = GMP + L-glutamate + AMP + diphosphate + 2 H(+). Its pathway is purine metabolism; GMP biosynthesis; GMP from XMP (L-Gln route): step 1/1. In terms of biological role, catalyzes the synthesis of GMP from XMP. This chain is GMP synthase [glutamine-hydrolyzing] subunit A, found in Halobacterium salinarum (strain ATCC 700922 / JCM 11081 / NRC-1) (Halobacterium halobium).